A 275-amino-acid chain; its full sequence is Large ribosomal subunit protein uL2 (275 aa).

2 disordered regions span residues 38–59 (TRGS…GGHK) and 223–275 (VAMN…RKRK). A compositionally biased stretch (basic residues) spans 50 to 59 (TVRHRGGGHK). Over residues 229–244 (DHPHGGGEGRTGEARE) the composition is skewed to basic and acidic residues.

Belongs to the universal ribosomal protein uL2 family. Part of the 50S ribosomal subunit. Forms a bridge to the 30S subunit in the 70S ribosome.

Its function is as follows. One of the primary rRNA binding proteins. Required for association of the 30S and 50S subunits to form the 70S ribosome, for tRNA binding and peptide bond formation. It has been suggested to have peptidyltransferase activity; this is somewhat controversial. Makes several contacts with the 16S rRNA in the 70S ribosome. The sequence is that of Large ribosomal subunit protein uL2 from Bordetella bronchiseptica (strain ATCC BAA-588 / NCTC 13252 / RB50) (Alcaligenes bronchisepticus).